A 1165-amino-acid polypeptide reads, in one-letter code: Tectonin beta-propeller repeat-containing protein 1 (1165 aa).

4 TECPR repeats span residues 209–240 (LSVW…SLLD), 254–285 (DLLW…SIVE), 301–332 (SVVW…IEMV), and 344–376 (DQVW…KAIV). The interval 404–486 (RGSGESAPSD…GPATTPAELP (83 aa)) is disordered. Positions 611 to 717 (KTGALQWWCD…WLALLSLSCC (107 aa)) constitute a PH domain. The stretch at 729–756 (QAIWSITCKGDIFVSEPSPDLEAHEHPL) is one TECPR 5 repeat. Phosphoserine occurs at positions 938 and 949. TECPR repeat units follow at residues 953 to 984 (IALW…LHVG), 998 to 1029 (YQVW…YHIP), 1044 to 1075 (TSVY…EHVS), and 1087 to 1127 (DQVW…DYGI). Residues 1140 to 1165 (ATRAPRSSSQEQEPSAPPEAHDPVCC) form a disordered region. The segment covering 1143–1153 (APRSSSQEQEP) has biased composition (low complexity).

Belongs to the TECPR1 family. Interacts with ATG5; the interaction is direct. Interacts with WIPI2. Interacts with the ATG5-ATG12 conjugate, the interaction is however mutually exclusive with ATG16, since it does not interact with ATG12-ATG5-ATG16 complex.

It localises to the cytoplasmic vesicle. The protein localises to the autophagosome membrane. The protein resides in the lysosome membrane. In terms of biological role, tethering factor involved in autophagy. Involved in autophagosome maturation by promoting the autophagosome fusion with lysosomes: acts by associating with both the ATG5-ATG12 conjugate and phosphatidylinositol-3-phosphate (PtdIns(3)P) present at the surface of autophagosomes. Also involved in selective autophagy against bacterial pathogens, by being required for phagophore/preautophagosomal structure biogenesis and maturation. The protein is Tectonin beta-propeller repeat-containing protein 1 (TECPR1) of Pongo abelii (Sumatran orangutan).